Reading from the N-terminus, the 469-residue chain is Cysteine--tRNA ligase (469 aa).

Cys-29 contacts Zn(2+). A 'HIGH' region motif is present at residues 31–41 (PTVYNYIHIGN). 3 residues coordinate Zn(2+): Cys-210, His-235, and Glu-239. Residues 267–271 (KMSKS) carry the 'KMSKS' region motif. Lys-270 serves as a coordination point for ATP.

This sequence belongs to the class-I aminoacyl-tRNA synthetase family. Monomer. Zn(2+) serves as cofactor.

The protein resides in the cytoplasm. It catalyses the reaction tRNA(Cys) + L-cysteine + ATP = L-cysteinyl-tRNA(Cys) + AMP + diphosphate. The sequence is that of Cysteine--tRNA ligase from Thermosipho africanus (strain TCF52B).